The primary structure comprises 483 residues: MQWDIVIGLEIHVQLATQTKIFSGSSTAYGAEPNTQANAVDLAMPGTLPVPNEQAFRYAVMFGLATNAEIGRRSVFERKNYFYPDLPKGYQTTQLAQPIVGPGYVDIDLADGSTKRVRIHHAHLEEDAGKSLHEDYHGMTGIDLNRAGTPLIEVVTEPDMTSAEEAVAFAKKLHSIVTSLGICDGDMSQGSMRFDVNISLKPKGSDTLGTRTETKNLNSFRFMEQAIAHEVERQMDILEDGGVIVQETRLYNGDRDESRSMRTKEEANDYRYFPCPDLLPVEIDDAFIEDARSRLPELPDARRARFKEQYGLNDYDAGILSADAKLAAFFEETVEHGKDAKLAANWIQGEFSARLNAEEKSVAEAPITGAQLGAMVTRIADNTLSSAGAKKVFEALWTGENNDVDAIIEAKGLKQVSDTGALESMVDEVLAGMPDQVAQYQNEEDPKKRKKMLGGFMGPLMKASKGQGNPKLFNEILVRKLGG.

This sequence belongs to the GatB/GatE family. GatB subfamily. As to quaternary structure, heterotrimer of A, B and C subunits.

The catalysed reaction is L-glutamyl-tRNA(Gln) + L-glutamine + ATP + H2O = L-glutaminyl-tRNA(Gln) + L-glutamate + ADP + phosphate + H(+). The enzyme catalyses L-aspartyl-tRNA(Asn) + L-glutamine + ATP + H2O = L-asparaginyl-tRNA(Asn) + L-glutamate + ADP + phosphate + 2 H(+). In terms of biological role, allows the formation of correctly charged Asn-tRNA(Asn) or Gln-tRNA(Gln) through the transamidation of misacylated Asp-tRNA(Asn) or Glu-tRNA(Gln) in organisms which lack either or both of asparaginyl-tRNA or glutaminyl-tRNA synthetases. The reaction takes place in the presence of glutamine and ATP through an activated phospho-Asp-tRNA(Asn) or phospho-Glu-tRNA(Gln). This chain is Aspartyl/glutamyl-tRNA(Asn/Gln) amidotransferase subunit B, found in Marinobacter nauticus (strain ATCC 700491 / DSM 11845 / VT8) (Marinobacter aquaeolei).